We begin with the raw amino-acid sequence, 256 residues long: 5-keto-4-deoxy-D-glucarate aldolase (256 aa).

His-50 functions as the Proton acceptor in the catalytic mechanism. A substrate-binding site is contributed by Gln-151. Residue Glu-153 coordinates Mg(2+). Residues Ser-178 and Asp-179 each coordinate substrate. A Mg(2+)-binding site is contributed by Asp-179.

Belongs to the HpcH/HpaI aldolase family. KDGluc aldolase subfamily. As to quaternary structure, homohexamer; trimer of dimers. Mg(2+) serves as cofactor.

The catalysed reaction is 5-dehydro-4-deoxy-D-glucarate = 2-hydroxy-3-oxopropanoate + pyruvate. It catalyses the reaction 2-dehydro-3-deoxy-D-glucarate = 2-hydroxy-3-oxopropanoate + pyruvate. It participates in carbohydrate acid metabolism; galactarate degradation; D-glycerate from galactarate: step 2/3. Functionally, catalyzes the reversible retro-aldol cleavage of both 5-keto-4-deoxy-D-glucarate and 2-keto-3-deoxy-D-glucarate to pyruvate and tartronic semialdehyde. This chain is 5-keto-4-deoxy-D-glucarate aldolase, found in Klebsiella pneumoniae subsp. pneumoniae (strain ATCC 700721 / MGH 78578).